A 790-amino-acid polypeptide reads, in one-letter code: Tumor necrosis factor alpha-induced protein 3 (790 aa).

A2 carries the N-acetylalanine modification. The TRAF-binding stretch occupies residues 58–300 (PQFREIIHKA…LTDPENEMKE (243 aa)). An OTU domain is found at 92–263 (LVALKTNGDG…SHHFVPLVTL (172 aa)). Residue D100 is part of the active site. C103 functions as the Nucleophile in the catalytic mechanism. Interaction with ubiquitin regions lie at residues 157–159 (LCY), 190–192 (SLE), and 224–227 (FAPL). Residue H256 is the Proton acceptor of the active site. Residues 369–775 (AQNPMESSLP…ACDHFGNAKC (407 aa)) are interaction with TNIP1. An A20-type 1 zinc finger spans residues 381 to 416 (SLMDVKCETPNCPFFMSVNTQPLCHECSERRQKNQN). The segment at 386–453 (KCETPNCPFF…EPLAWNPEEP (68 aa)) is interaction with RIPK1. The Zn(2+) site is built by C387, C392, C404, and C407. A disordered region spans residues 415–467 (QNKLPKLNSKPGPEGLPGMALGASRGEAYEPLAWNPEEPTGGPHSAPPTAPSP). At S459 the chain carries Phosphoserine. A20-type zinc fingers lie at residues 472–507 (ETTAMKCRSPGCPFTLNVQHNGFCERCHNARQLHAS) and 515–548 (HLDPGKCQACLQDVTRTFNGICSTCFKRTTAEAS). The Zn(2+) site is built by C478, C483, C495, C498, C521, C524, C536, and C539. Positions 550 to 580 (SLSTSLPPSCHQRSKSDPSQLVRSPSPHSCH) are disordered. A compositionally biased stretch (polar residues) spans 566–576 (DPSQLVRSPSP). The residue at position 575 (S575) is a Phosphoserine. The A20-type 4 zinc-finger motif lies at 601–636 (RTGTSKCRKAGCMYFGTPENKGFCTLCFIEYRENKH). The segment at 605–655 (SKCRKAGCMYFGTPENKGFCTLCFIEYRENKHLVAASGKASPTASRFQNTI) is required for proteasomal degradation of UBE2N and UBE2D3, TRAF6 deubiquitination, and TAX1BP1 interaction with UBE2N. The sufficient for inhibitory activity of TNF-induced NF-kappa-B activity stretch occupies residues 606–790 (KCRKAGCMYF…ECFQFKQMYG (185 aa)). 4 residues coordinate Zn(2+): C607, C612, C624, and C627. A Phosphoserine modification is found at S645. Residues 651-686 (FQNTIPCLGRECGTLGSTMFEGYCQKCFIEAQNQRF) form an A20-type 5 zinc finger. Positions 657, 662, 674, and 677 each coordinate Zn(2+). A compositionally biased stretch (basic and acidic residues) spans 689 to 705 (AKRTEEQLRSSQRRDVP). The interval 689 to 712 (AKRTEEQLRSSQRRDVPRTTQSTS) is disordered. The tract at residues 697–790 (RSSQRRDVPR…ECFQFKQMYG (94 aa)) is required for lysosomal localization and for TRAF2 lysosomal degradation. 2 consecutive A20-type zinc fingers follow at residues 710 to 745 (STSRPKCARASCKNILACRSEELCMECQHPNPRMGP) and 756 to 790 (DPPKQRCWAPACDHFGNAKCNGYCNECFQFKQMYG). Residues C716, C721, C733, C736, C762, C767, C779, and C782 each contribute to the Zn(2+) site.

It belongs to the peptidase C64 family. Homodimer. Interacts with TNIP1, TAX1BP1 and TRAF2. Interacts with RNF11, ITCH and TAX1BP1 only after TNF stimulation; these interaction are transient and they are lost after 1 hour of stimulation with TNF. Interacts with YWHAZ and YWHAH. Interacts with IKBKG; the interaction is induced by TNF stimulation and by polyubiquitin. Interacts with RIPK1. Interacts with UBE2N; the interaction requires TAX1BP1. Interacts with TRAF6. Proteolytically cleaved by MALT1 upon TCR stimulation; disrupts NF-kappa-B inhibitory function and results in increased IL-2 production. It is proposed that only a fraction of TNFAIP3 colocalized with TCR and CBM complex is cleaved, leaving the main TNFAIP3 pool intact.

It is found in the cytoplasm. The protein localises to the nucleus. The protein resides in the lysosome. The catalysed reaction is Thiol-dependent hydrolysis of ester, thioester, amide, peptide and isopeptide bonds formed by the C-terminal Gly of ubiquitin (a 76-residue protein attached to proteins as an intracellular targeting signal).. Its function is as follows. Ubiquitin-editing enzyme that contains both ubiquitin ligase and deubiquitinase activities. Involved in immune and inflammatory responses signaled by cytokines, such as TNF-alpha and IL-1 beta, or pathogens via Toll-like receptors (TLRs) through terminating NF-kappa-B activity. Essential component of a ubiquitin-editing protein complex, comprising also RNF11, ITCH and TAX1BP1, that ensures the transient nature of inflammatory signaling pathways. In cooperation with TAX1BP1 promotes disassembly of E2-E3 ubiquitin protein ligase complexes in IL-1R and TNFR-1 pathways; affected are at least E3 ligases TRAF6, TRAF2 and BIRC2, and E2 ubiquitin-conjugating enzymes UBE2N and UBE2D3. In cooperation with TAX1BP1 promotes ubiquitination of UBE2N and proteasomal degradation of UBE2N and UBE2D3. Upon TNF stimulation, deubiquitinates 'Lys-63'-polyubiquitin chains on RIPK1 and catalyzes the formation of 'Lys-48'-polyubiquitin chains. This leads to RIPK1 proteasomal degradation and consequently termination of the TNF- or LPS-mediated activation of NF-kappa-B. Deubiquitinates TRAF6 probably acting on 'Lys-63'-linked polyubiquitin. Upon T-cell receptor (TCR)-mediated T-cell activation, deubiquitinates 'Lys-63'-polyubiquitin chains on MALT1 thereby mediating disassociation of the CBM (CARD11:BCL10:MALT1) and IKK complexes and preventing sustained IKK activation. Deubiquitinates NEMO/IKBKG; the function is facilitated by TNIP1 and leads to inhibition of NF-kappa-B activation. Upon stimulation by bacterial peptidoglycans, probably deubiquitinates RIPK2. Can also inhibit I-kappa-B-kinase (IKK) through a non-catalytic mechanism which involves polyubiquitin; polyubiquitin promotes association with IKBKG and prevents IKK MAP3K7-mediated phosphorylation. Targets TRAF2 for lysosomal degradation. In vitro able to deubiquitinate 'Lys-11'-, 'Lys-48'- and 'Lys-63' polyubiquitin chains. Inhibitor of programmed cell death. Has a role in the function of the lymphoid system. Required for LPS-induced production of pro-inflammatory cytokines and IFN beta in LPS-tolerized macrophages. This Macaca fascicularis (Crab-eating macaque) protein is Tumor necrosis factor alpha-induced protein 3 (TNFAIP3).